Reading from the N-terminus, the 209-residue chain is Pyridoxine/pyridoxamine 5'-phosphate oxidase (209 aa).

Residues 7–10 (RADY) and Lys64 contribute to the substrate site. FMN contacts are provided by residues 59–64 (RIVLLK), 74–75 (FT), and Lys81. Substrate is bound by residues Tyr121, Arg125, and Ser129. FMN is bound by residues 138–139 (QS), Trp182, and Arg192.

The protein belongs to the pyridoxamine 5'-phosphate oxidase family. Homodimer. It depends on FMN as a cofactor.

The catalysed reaction is pyridoxamine 5'-phosphate + O2 + H2O = pyridoxal 5'-phosphate + H2O2 + NH4(+). It catalyses the reaction pyridoxine 5'-phosphate + O2 = pyridoxal 5'-phosphate + H2O2. It functions in the pathway cofactor metabolism; pyridoxal 5'-phosphate salvage; pyridoxal 5'-phosphate from pyridoxamine 5'-phosphate: step 1/1. Its pathway is cofactor metabolism; pyridoxal 5'-phosphate salvage; pyridoxal 5'-phosphate from pyridoxine 5'-phosphate: step 1/1. Functionally, catalyzes the oxidation of either pyridoxine 5'-phosphate (PNP) or pyridoxamine 5'-phosphate (PMP) into pyridoxal 5'-phosphate (PLP). This is Pyridoxine/pyridoxamine 5'-phosphate oxidase from Haemophilus ducreyi (strain 35000HP / ATCC 700724).